Consider the following 268-residue polypeptide: Protein MGF 300-1L (268 aa).

Topologically, residues 1–175 (MVSLTTYCLK…QTFKTFYAKN (175 aa)) are cytoplasmic. A helical transmembrane segment spans residues 176–193 (YSLSTLYCIFLAIYYKLY). Residues 194–268 (MALRKMVKIY…MYAFSQNNFW (75 aa)) lie on the Extracellular side of the membrane.

It belongs to the asfivirus MGF 300 family.

It localises to the host membrane. In terms of biological role, plays a role in virus cell tropism, and may be required for efficient virus replication in macrophages. The sequence is that of Protein MGF 300-1L from African swine fever virus (isolate Tick/Malawi/Lil 20-1/1983) (ASFV).